The chain runs to 368 residues: Zinc finger protein 24 (368 aa).

A Glycyl lysine isopeptide (Lys-Gly) (interchain with G-Cter in SUMO2) cross-link involves residue Lys-22. Residue Lys-27 forms a Glycyl lysine isopeptide (Lys-Gly) (interchain with G-Cter in SUMO1); alternate linkage. Residue Lys-27 forms a Glycyl lysine isopeptide (Lys-Gly) (interchain with G-Cter in SUMO2); alternate linkage. One can recognise an SCAN box domain in the interval 52 to 134 (RQRFRQFGYQ…TVLEDLESEL (83 aa)). 2 positions are modified to phosphoserine: Ser-132 and Ser-142. Glycyl lysine isopeptide (Lys-Gly) (interchain with G-Cter in SUMO2) cross-links involve residues Lys-147, Lys-177, and Lys-236. A C2H2-type 1 zinc finger spans residues 251 to 273 (HICDECGKHFSQGSALILHQRIH). Residues 251 to 301 (HICDECGKHFSQGSALILHQRIHSGEKPYGCVECGKAFSRSSILVQHQRVH) form a necessary and sufficient for nuclear localization region. Ser-274 bears the Phosphoserine mark. Residues Lys-277 and Lys-286 each participate in a glycyl lysine isopeptide (Lys-Gly) (interchain with G-Cter in SUMO2) cross-link. 3 consecutive C2H2-type zinc fingers follow at residues 279–301 (YGCV…QRVH), 307–329 (YKCL…QRIH), and 335–357 (YECV…QRRH). Ser-292 is modified (phosphoserine). Tyr-335 bears the Phosphotyrosine mark. Glycyl lysine isopeptide (Lys-Gly) (interchain with G-Cter in SUMO2) cross-links involve residues Lys-361 and Lys-367.

Belongs to the krueppel C2H2-type zinc-finger protein family. Sumoylated.

The protein resides in the nucleus. In terms of biological role, transcription factor required for myelination of differentiated oligodendrocytes. Required for the conversion of oligodendrocytes from the premyelinating to the myelinating state. In the developing central nervous system (CNS), involved in the maintenance in the progenitor stage by promoting the cell cycle. Specifically binds to the 5'-TCAT-3' DNA sequence. Has transcription repressor activity in vitro. This Pongo abelii (Sumatran orangutan) protein is Zinc finger protein 24 (ZNF24).